The chain runs to 590 residues: V-type ATP synthase alpha chain (590 aa).

Residue 231–238 (GPFGSGKT) coordinates ATP.

Belongs to the ATPase alpha/beta chains family.

It carries out the reaction ATP + H2O + 4 H(+)(in) = ADP + phosphate + 5 H(+)(out). Functionally, produces ATP from ADP in the presence of a proton gradient across the membrane. The V-type alpha chain is a catalytic subunit. The protein is V-type ATP synthase alpha chain of Clostridium botulinum (strain ATCC 19397 / Type A).